A 614-amino-acid polypeptide reads, in one-letter code: Probable Xaa-Pro aminopeptidase P (614 aa).

4 residues coordinate Mn(2+): aspartate 411, aspartate 422, glutamate 520, and glutamate 534.

Belongs to the peptidase M24B family. Mn(2+) serves as cofactor.

The catalysed reaction is Release of any N-terminal amino acid, including proline, that is linked to proline, even from a dipeptide or tripeptide.. In terms of biological role, catalyzes the removal of a penultimate prolyl residue from the N-termini of peptides. This Sordaria macrospora (strain ATCC MYA-333 / DSM 997 / K(L3346) / K-hell) protein is Probable Xaa-Pro aminopeptidase P (AMPP).